A 99-amino-acid chain; its full sequence is Integration host factor subunit alpha (99 aa).

It belongs to the bacterial histone-like protein family. Heterodimer of an alpha and a beta chain.

Its function is as follows. This protein is one of the two subunits of integration host factor, a specific DNA-binding protein that functions in genetic recombination as well as in transcriptional and translational control. The protein is Integration host factor subunit alpha of Thioalkalivibrio sulfidiphilus (strain HL-EbGR7).